Consider the following 457-residue polypeptide: NADH-ubiquinone oxidoreductase chain 4 (457 aa).

The next 12 helical transmembrane spans lie at 22 to 42 (NLWP…IALI), 59 to 79 (SMQL…LIAS), 95 to 115 (IVLV…LELI), 116 to 136 (LFYI…TRWG), 148 to 168 (FIFY…ALYF), 191 to 211 (LTVW…IYGF), 223 to 243 (PVAG…YGLM), 257 to 277 (SSLP…IICI), 282 to 302 (LKAL…AGVF), 309 to 329 (INGA…LFAL), 350 to 370 (LILP…LGFP), and 433 to 453 (LFLL…LVLI).

Belongs to the complex I subunit 4 family.

Its subcellular location is the mitochondrion membrane. It catalyses the reaction a ubiquinone + NADH + 5 H(+)(in) = a ubiquinol + NAD(+) + 4 H(+)(out). Core subunit of the mitochondrial membrane respiratory chain NADH dehydrogenase (Complex I) that is believed to belong to the minimal assembly required for catalysis. Complex I functions in the transfer of electrons from NADH to the respiratory chain. The immediate electron acceptor for the enzyme is believed to be ubiquinone. This Arbacia lixula (Black urchin) protein is NADH-ubiquinone oxidoreductase chain 4 (ND4).